The chain runs to 310 residues: MANIVYKLSESEIQHLLQQITFETSQLSPGMKARTKYKQSVINIYNSGKVMFQGKNAEAVAQQLLPDHTTTSKNSSSSNQSSGETLAYNHYNCIGSDEAGSGDYFGPLTVCAAYVSKENVKILKTLGVDDSKKLNDQKIIELAEQLITFIPHSLLTLDNPKYNDRQAIGWSQVKMKAELHNEAIKNVTQKINCNELNYIVIDQFAVRGVYQRYALSSLPYPEKTKFETKGESKSLAIAAASIISRYAFVKHMDHISHKMKQDIPKGASNKVDLIAAQIIDKHGIETLDLISKKHFKNREKAQNLVTKKYK.

The 217-residue stretch at 91 to 307 folds into the RNase H type-2 domain; the sequence is YNCIGSDEAG…REKAQNLVTK (217 aa). A divalent metal cation is bound by residues D97, E98, and D202.

Belongs to the RNase HII family. RnhC subfamily. Requires Mn(2+) as cofactor. It depends on Mg(2+) as a cofactor.

The protein resides in the cytoplasm. The enzyme catalyses Endonucleolytic cleavage to 5'-phosphomonoester.. Its function is as follows. Endonuclease that specifically degrades the RNA of RNA-DNA hybrids. This Staphylococcus haemolyticus (strain JCSC1435) protein is Ribonuclease HIII.